An 831-amino-acid chain; its full sequence is Heat shock 70 kDa protein 15 (831 aa).

Disordered regions lie at residues 502-579 (EEEV…KKKV) and 784-831 (IMTK…EGST). The span at 512–526 (DQSEETAKMDTDKAS) shows a compositional bias: basic and acidic residues. 2 positions are modified to phosphoserine: serine 533 and serine 536. The segment covering 787–800 (KPKPAAKAEAPQAK) has biased composition (low complexity).

Belongs to the heat shock protein 70 (TC 1.A.33) family. HSP110/SSE subfamily.

It localises to the cytoplasm. It is found in the nucleus. Functionally, in cooperation with other chaperones, Hsp70s are key components that facilitate folding of de novo synthesized proteins, assist translocation of precursor proteins into organelles, and are responsible for degradation of damaged protein under stress conditions. In Arabidopsis thaliana (Mouse-ear cress), this protein is Heat shock 70 kDa protein 15 (HSP70-15).